Reading from the N-terminus, the 640-residue chain is ATP-dependent rRNA helicase spb4 (640 aa).

The Q motif signature appears at 14–42; the sequence is WDAVTPALSEWVLEAMSSMGFTRMTPVQA. The Helicase ATP-binding domain occupies 45 to 249; the sequence is IPLFMAHKDV…RVGLRNPVKV (205 aa). 58–65 serves as a coordination point for ATP; it reads AVTGSGKT. Residues 197-200 carry the DEAD box motif; that stretch reads DEAD. A Helicase C-terminal domain is found at 283-437; it reads ALKRILSSVQ…LITFSDADAA (155 aa). Residues 521–629 adopt a coiled-coil conformation; it reads AYKDKQREKR…AAKAAGAKAD (109 aa). 2 disordered regions span residues 531–595 and 607–640; these read RKEL…EKQK and RKKN…QGFD. A compositionally biased stretch (basic residues) spans 568 to 582; that stretch reads KKLKRREQKKSKHEK. Basic and acidic residues predominate over residues 583–595; it reads ARWEKMTEEEKQK. Residues 630 to 640 show a composition bias toward acidic residues; sequence GDDEEEFQGFD.

It belongs to the DEAD box helicase family. DDX55/SPB4 subfamily. In terms of assembly, component of pre-60S ribosomal complexes.

It localises to the nucleus. The protein resides in the nucleolus. The enzyme catalyses ATP + H2O = ADP + phosphate + H(+). ATP-binding RNA helicase involved in the biogenesis of 60S ribosomal subunits. Binds 90S pre-ribosomal particles and dissociates from pre-60S ribosomal particles after processing of 27SB pre-rRNA. Required for the normal formation of 18S rRNA through the processing of pre-rRNAs at sites A0, A1 and A2, and the normal formation of 25S and 5.8S rRNAs through the processing of pre-rRNAs at sites C1 and C2. The sequence is that of ATP-dependent rRNA helicase spb4 from Neosartorya fischeri (strain ATCC 1020 / DSM 3700 / CBS 544.65 / FGSC A1164 / JCM 1740 / NRRL 181 / WB 181) (Aspergillus fischerianus).